The sequence spans 466 residues: Argininosuccinate lyase (466 aa).

This sequence belongs to the lyase 1 family. Argininosuccinate lyase subfamily.

It localises to the cytoplasm. The catalysed reaction is 2-(N(omega)-L-arginino)succinate = fumarate + L-arginine. Its pathway is amino-acid biosynthesis; L-arginine biosynthesis; L-arginine from L-ornithine and carbamoyl phosphate: step 3/3. This chain is Argininosuccinate lyase, found in Bartonella bacilliformis (strain ATCC 35685 / KC583 / Herrer 020/F12,63).